We begin with the raw amino-acid sequence, 1374 residues long: Tripeptidyl-peptidase 2 (1374 aa).

Positions 62–558 (ALLLNKTDTE…QGMIKIATAY (497 aa)) constitute a Peptidase S8 domain. Catalysis depends on charge relay system residues aspartate 93, histidine 314, and serine 499.

It belongs to the peptidase S8 family. As to expression, expressed in intestinal fat-storing cells and some head neurons.

The catalysed reaction is Release of an N-terminal tripeptide from a polypeptide.. Its function is as follows. Component of the proteolytic cascade acting downstream of the 26S proteasome in the ubiquitin-proteasome pathway. Has a role in regulation of fat storage. In Caenorhabditis elegans, this protein is Tripeptidyl-peptidase 2 (tpp-2).